The primary structure comprises 152 residues: FAD synthase (152 aa).

ATP is bound by residues 16 to 17 (TF), 21 to 24 (HPGH), Asp-101, and Tyr-129.

This sequence belongs to the archaeal FAD synthase family. In terms of assembly, homodimer. A divalent metal cation serves as cofactor.

It carries out the reaction FMN + ATP + H(+) = FAD + diphosphate. Its pathway is cofactor biosynthesis; FAD biosynthesis; FAD from FMN: step 1/1. Catalyzes the transfer of the AMP portion of ATP to flavin mononucleotide (FMN) to produce flavin adenine dinucleotide (FAD) coenzyme. The protein is FAD synthase of Methanocaldococcus vulcanius (strain ATCC 700851 / DSM 12094 / M7) (Methanococcus vulcanius).